Here is a 262-residue protein sequence, read N- to C-terminus: Ninja-family protein 2 (262 aa).

A disordered region spans residues 49–70 (RNSLACNTSKEAAGQSPKEMNA).

This sequence belongs to the Ninja family.

The protein localises to the nucleus. The protein is Ninja-family protein 2 of Zea mays (Maize).